The following is a 469-amino-acid chain: Sulfate adenylyltransferase subunit 1 (469 aa).

The 216-residue stretch at 22-237 (KEVLRFITCG…LEEVPVKSEE (216 aa)) folds into the tr-type G domain. The G1 stretch occupies residues 31-38 (GSVDDGKS). 31–38 (GSVDDGKS) is a GTP binding site. Residues 89-93 (GITID) form a G2 region. Residues 110–113 (DTPG) are G3. GTP-binding positions include 110–114 (DTPGH) and 165–168 (NKMD). The interval 165–168 (NKMD) is G4. Residues 202–204 (SAK) are G5.

It belongs to the TRAFAC class translation factor GTPase superfamily. Classic translation factor GTPase family. CysN/NodQ subfamily. As to quaternary structure, heterodimer composed of CysD, the smaller subunit, and CysN.

The enzyme catalyses sulfate + ATP + H(+) = adenosine 5'-phosphosulfate + diphosphate. Its pathway is sulfur metabolism; hydrogen sulfide biosynthesis; sulfite from sulfate: step 1/3. With CysD forms the ATP sulfurylase (ATPS) that catalyzes the adenylation of sulfate producing adenosine 5'-phosphosulfate (APS) and diphosphate, the first enzymatic step in sulfur assimilation pathway. APS synthesis involves the formation of a high-energy phosphoric-sulfuric acid anhydride bond driven by GTP hydrolysis by CysN coupled to ATP hydrolysis by CysD. The polypeptide is Sulfate adenylyltransferase subunit 1 (Methylorubrum extorquens (strain CM4 / NCIMB 13688) (Methylobacterium extorquens)).